The sequence spans 839 residues: Transient receptor potential cation channel subfamily V member 1 (839 aa).

Residues 1–60 (MEKWASLDSDESEPPAQENSCPDPPDRDPNSKPPPAKPHIFATRSRTRLFGKGDSEEASP) form a disordered region. The Cytoplasmic portion of the chain corresponds to 1–433 (MEKWASLDSD…QDKWDRFVKR (433 aa)). The stretch at 111–139 (RLYDRRSIFDAVAQSNCQELESLLSFLQK) is one ANK 1 repeat. Arg116 is a binding site for ATP. Ser117 is modified (phosphoserine; by PKA and PKD). Thr145 is modified (phosphothreonine; by PKA; in vitro). Residues 154 to 186 (TGKTCLLKAMLNLHNGQNDTIALLLDIARKTDS) form an ANK 2 repeat. ATP is bound by residues Lys156, Lys161, Asn165, 200–203 (YKGQ), and 211–212 (ER). 4 ANK repeats span residues 204-229 (TALH…ADVQ), 250-277 (ELPL…QPAD), 286-322 (NTVL…KLHP), and 336-359 (TPLA…REIH). Residue Thr371 is modified to Phosphothreonine; by PKA; in vitro. One copy of the ANK 7 repeat lies at 394 to 416 (NSVLEVIAYSSSETPNRHDMLLV). A helical transmembrane segment spans residues 434-455 (IFYFNFFVYCLYMIIFTTAAYY). Over 456–472 (RPVEGLPPYKLNNTVGD) the chain is Extracellular. A helical transmembrane segment spans residues 473 to 497 (YFRVTGEILSVSGGVYFFFRGIQYF). Over 498–510 (LQRRPSLKSLFVD) the chain is Cytoplasmic. Phosphoserine; by PKC/PRKCE is present on Ser503. A helical transmembrane segment spans residues 511–532 (SYSEILFFVQSLFMLVSVVLYF). Residue 512 to 513 (YS) participates in resiniferatoxin binding. Residues 533–535 (SHR) are Extracellular-facing. A helical membrane pass occupies residues 536 to 556 (KEYVASMVFSLAMGWTNMLYY). Thr551 and Arg558 together coordinate resiniferatoxin. Residues 557–559 (TRG) are Cytoplasmic-facing. Residues 560-598 (FQQMGIYAVMIEKMILRDLCRFMFVYLVFLFGFSTAVVT) traverse the membrane as a helical segment. Over 599-630 (LIEDGKNNSLPVESPPHKCRGSACRPGNSYNS) the chain is Extracellular. An N-linked (GlcNAc...) asparagine glycan is attached at Asn605. Positions 631-652 (LYSTCLELFKFTIGMGDLEFTE) form an intramembrane region, pore-forming. Residue Gly644 participates in Na(+) binding. A Selectivity filter motif is present at residues 644 to 647 (GMGD). A Ca(2+)-binding site is contributed by Asp647. Residues 653–656 (NYDF) lie on the Extracellular side of the membrane. The chain crosses the membrane as a helical span at residues 657 to 683 (KAVFIILLLAYVILTYILLLNMLIALM). At 684–839 (GETVNKIAQE…FKDSMAPGEK (156 aa)) the chain is on the cytoplasmic side. The AD stretch occupies residues 685–713 (ETVNKIAQESKNIWKLQRAITILDTEKSF). Position 705 is a phosphothreonine (Thr705). Positions 768 to 802 (EGVKRTLSFSLRSGRVSGRNWKNFALVPLLRDAST) are interaction with calmodulin. Phosphoserine is present on Ser775. Residues 778-793 (LRSGRVSGRNWKNFAL) are required for PIP2-mediated channel inhibition. Ser801 is modified (phosphoserine; by PKC/PRKCE and PKC/PRKCZ). Basic and acidic residues predominate over residues 802–815 (TRDRHSTQPEEVQL). The interval 802–839 (TRDRHSTQPEEVQLKHYTGSLKPEDAEVFKDSMAPGEK) is disordered. A Phosphoserine modification is found at Ser821. Residues 823–839 (KPEDAEVFKDSMAPGEK) are compositionally biased toward basic and acidic residues.

It belongs to the transient receptor (TC 1.A.4) family. TrpV subfamily. TRPV1 sub-subfamily. Homotetramer. May also form a heteromeric channel with TRPV3. Interacts with CALM, PRKCM and CSK. Interacts with PRKCG and NTRK1, probably by forming a trimeric complex. Interacts with PIRT. Interacts with the Scolopendra mutilans RhTx toxin. Interacts with TMEM100. Interacts with PACS2. Post-translationally, phosphorylation by PKA reverses capsaicin-induced dephosphorylation at multiple sites probably including Ser-117 as a major phosphorylation site. Phosphorylation by CAMKII seems to regulate binding to vanilloids. Phosphorylated and modulated by PRKCE, PRKCM and probably PRKCZ. Dephosphorylation by calcineurin seems to lead to receptor desensitization and phosphorylation by CAMKII recovers activity. Detected in neurons in the root ganglia (at protein level). Detected in dorsal root ganglia.

It is found in the postsynaptic cell membrane. The protein resides in the cell projection. It localises to the dendritic spine membrane. Its subcellular location is the cell membrane. The catalysed reaction is Ca(2+)(in) = Ca(2+)(out). It carries out the reaction Mg(2+)(in) = Mg(2+)(out). The enzyme catalyses Na(+)(in) = Na(+)(out). It catalyses the reaction K(+)(in) = K(+)(out). Its activity is regulated as follows. The channel is sensitized by ATP binding. Repeated stimulation with capsaicin gives rise to progressively smaller responses, due to desensitization. This desensitization is triggered by the influx of calcium ions and is inhibited by elevated ATP levels. Ca(2+) and CALM displace ATP from its binding site and trigger a conformation change that leads to a closed, desensitized channel. The double-knot toxin (DkTx) from the Chinese earth tiger tarantula activates the channel and traps it in an open conformation. The Scolopendra mutilans RhTx toxin potentiates the heat activation pathway mediated by this channel by binding to the charge-rich outer pore region (in an activated state). Channel activity is activated via the interaction with PIRT and phosphatidylinositol 4,5-bisphosphate (PIP2). Both PIRT and PIP2 are required to activate channel activity. Intracellular PIP2 inhibits desensitization. Its function is as follows. Non-selective calcium permeant cation channel involved in detection of noxious chemical and thermal stimuli. Seems to mediate proton influx and may be involved in intracellular acidosis in nociceptive neurons. Involved in mediation of inflammatory pain and hyperalgesia. Sensitized by a phosphatidylinositol second messenger system activated by receptor tyrosine kinases, which involves PKC isozymes and PCL. Activation by vanilloids, like capsaicin, and temperatures higher than 42 degrees Celsius. Upon activation, exhibits a time- and Ca(2+)-dependent outward rectification, followed by a long-lasting refractory state. Mild extracellular acidic pH (6.5) potentiates channel activation by noxious heat and vanilloids, whereas acidic conditions (pH &lt;6) directly activate the channel. Can be activated by endogenous compounds, including 12-hydroperoxytetraenoic acid and bradykinin. Acts as ionotropic endocannabinoid receptor with central neuromodulatory effects. Triggers a form of long-term depression (TRPV1-LTD) mediated by the endocannabinoid anandamine in the hippocampus and nucleus accumbens by affecting AMPA receptors endocytosis. The chain is Transient receptor potential cation channel subfamily V member 1 (Trpv1) from Mus musculus (Mouse).